The sequence spans 123 residues: Small ribosomal subunit protein uS12 (123 aa).

Residues 1–29 form a disordered region; sequence MPTINQLIRKKRQSSASRKKSPALQKCPQ. The span at 8 to 21 shows a compositional bias: basic residues; sequence IRKKRQSSASRKKS. Residue D89 is modified to 3-methylthioaspartic acid.

This sequence belongs to the universal ribosomal protein uS12 family. Part of the 30S ribosomal subunit. Contacts proteins S8 and S17. May interact with IF1 in the 30S initiation complex.

With S4 and S5 plays an important role in translational accuracy. Its function is as follows. Interacts with and stabilizes bases of the 16S rRNA that are involved in tRNA selection in the A site and with the mRNA backbone. Located at the interface of the 30S and 50S subunits, it traverses the body of the 30S subunit contacting proteins on the other side and probably holding the rRNA structure together. The combined cluster of proteins S8, S12 and S17 appears to hold together the shoulder and platform of the 30S subunit. The protein is Small ribosomal subunit protein uS12 of Chlamydia abortus (strain DSM 27085 / S26/3) (Chlamydophila abortus).